The sequence spans 152 residues: Deoxyuridine 5'-triphosphate nucleotidohydrolase (152 aa).

Residues 72-74 (RSG), N85, and 89-91 (TVD) each bind substrate.

It belongs to the dUTPase family. The cofactor is Mg(2+).

It carries out the reaction dUTP + H2O = dUMP + diphosphate + H(+). It functions in the pathway pyrimidine metabolism; dUMP biosynthesis; dUMP from dCTP (dUTP route): step 2/2. Its function is as follows. This enzyme is involved in nucleotide metabolism: it produces dUMP, the immediate precursor of thymidine nucleotides and it decreases the intracellular concentration of dUTP so that uracil cannot be incorporated into DNA. The sequence is that of Deoxyuridine 5'-triphosphate nucleotidohydrolase from Nitrobacter winogradskyi (strain ATCC 25391 / DSM 10237 / CIP 104748 / NCIMB 11846 / Nb-255).